The chain runs to 1018 residues: Collagen, type I, alpha 1a (1018 aa).

Basic and acidic residues predominate over residues 1 to 10 (QMSAGYDDKS). Residues 1 to 991 (QMSAGYDDKS…SGEYWLDPDQ (991 aa)) are disordered. Over residues 13-30 (MPVPGPMGPMGPRGPPGS) the composition is skewed to pro residues. A compositionally biased stretch (low complexity) spans 31-58 (PGASGPQGFTGPPGEPGEAGPSGAMGPR). A compositionally biased stretch (basic and acidic residues) spans 67–81 (NGEDGESGKPGRGGE). Residues 126–136 (PRGNDGAAGAA) are compositionally biased toward low complexity. The span at 138–151 (PPGPTGPAGPPGFP) shows a compositional bias: pro residues. Over residues 152–170 (GGPGAKGDAGAQGGRGPEG) the composition is skewed to gly residues. Low complexity-rich tracts occupy residues 171 to 214 (PAGA…AGAP) and 223 to 261 (SGPQGAAGAPGPKGNTGEVGAPGAKGEAGAKGEAGAPGV). The segment covering 284–296 (GARGGPGGRGFPG) has biased composition (gly residues). 4 stretches are compositionally biased toward low complexity: residues 370–385 (VGARGQPGVMGFPGPK), 424–442 (AGPAGERXXXGPAGAPGFQ), 452–510 (LPGE…QGMP), and 543–558 (RGLTGPLGLPGPAGAT). Residues 568–577 (GPVGPGGARG) are compositionally biased toward gly residues. Composition is skewed to low complexity over residues 591–627 (AGFAGPPGADGQPGAKGEAGDNGAKGDAGPPGAAGPT) and 641–663 (PKGARGAAGPPGATGFPGAAGRV). The segment covering 665–677 (PPGPSGNPGPPGP) has biased composition (pro residues). Low complexity-rich tracts occupy residues 701 to 746 (EVGA…XXPG) and 775 to 795 (PGLAGAPGEPGREGSPGNEGS). Pro residues predominate over residues 819–829 (APGPPGAPGPV). Residues 843–862 (PAGPAGSAGPAGPRGPAGAP) are compositionally biased toward low complexity. The segment covering 865-876 (RGDKGESGEAGE) has biased composition (basic and acidic residues). Over residues 889–925 (SGSSGEQGPAGAAGPAGPRGPAGSAGSPGKDGMSGLP) the composition is skewed to low complexity. Residues 932–1018 (GPRGGFDLGF…CTSHTGTWGK (87 aa)) enclose the Fibrillar collagen NC1 domain. Residues 948–959 (KAPDPFRDRDLE) show a composition bias toward basic and acidic residues. The segment covering 963 to 973 (TLKSLSQQLEQ) has biased composition (polar residues).

Belongs to the fibrillar collagen family.

It is found in the secreted. Its subcellular location is the extracellular space. The protein resides in the extracellular matrix. The chain is Collagen, type I, alpha 1a from Epinephelus costae (Goldblotch grouper).